A 189-amino-acid chain; its full sequence is Interferon alpha-1 (189 aa).

The signal sequence occupies residues 1-23; the sequence is MARLCAFLMVLAVLSYWPTCSLG. 2 disulfide bridges follow: Cys24-Cys122 and Cys52-Cys162. The N-linked (GlcNAc...) asparagine glycan is linked to Asn101.

The protein belongs to the alpha/beta interferon family. In terms of assembly, interacts with CR2. Post-translationally, glycosylated.

It localises to the secreted. Produced by macrophages, IFN-alpha have antiviral activities. Interferon stimulates the production of two enzymes: a protein kinase and an oligoadenylate synthetase. This is Interferon alpha-1 (Ifna1) from Mus musculus (Mouse).